Consider the following 163-residue polypeptide: Superoxide dismutase [Mn] (163 aa).

Mn(2+)-binding residues include histidine 2, histidine 50, aspartate 134, and histidine 138.

This sequence belongs to the iron/manganese superoxide dismutase family. Requires Mn(2+) as cofactor.

The catalysed reaction is 2 superoxide + 2 H(+) = H2O2 + O2. In terms of biological role, destroys superoxide anion radicals which are normally produced within the cells and which are toxic to biological systems. The protein is Superoxide dismutase [Mn] (sodA) of Mycobacterium scrofulaceum.